The following is a 161-amino-acid chain: Nucleotide-binding protein lpl1175 (161 aa).

The protein belongs to the YajQ family.

Nucleotide-binding protein. The chain is Nucleotide-binding protein lpl1175 from Legionella pneumophila (strain Lens).